The sequence spans 157 residues: Prefoldin subunit alpha (157 aa).

This sequence belongs to the prefoldin subunit alpha family. As to quaternary structure, heterohexamer of two alpha and four beta subunits.

The protein localises to the cytoplasm. In terms of biological role, molecular chaperone capable of stabilizing a range of proteins. Seems to fulfill an ATP-independent, HSP70-like function in archaeal de novo protein folding. The protein is Prefoldin subunit alpha of Methanopyrus kandleri (strain AV19 / DSM 6324 / JCM 9639 / NBRC 100938).